We begin with the raw amino-acid sequence, 276 residues long: Lectin-like protein At3g16530 (276 aa).

The first 19 residues, 1–19 (MQIHKLCFLVLFLANAAFA), serve as a signal peptide directing secretion. A legume-lectin like region spans residues 20–270 (VKFNFDSFDG…RHDIWSWSFE (251 aa)). N-linked (GlcNAc...) asparagine glycans are attached at residues N79, N129, and N196.

This sequence belongs to the leguminous lectin family.

It localises to the secreted. It is found in the extracellular space. The protein localises to the apoplast. The chain is Lectin-like protein At3g16530 from Arabidopsis thaliana (Mouse-ear cress).